The chain runs to 1666 residues: Cortactin-binding protein 2 (1666 aa).

5 disordered regions span residues 1 to 25 (MATD…APAE), 202 to 224 (EKKR…AEME), 366 to 411 (IVSS…PAIQ), 457 to 481 (NANN…SPTS), and 501 to 619 (RFTS…PKPS). Residues 120–274 (KMQERMSTQL…MTEQLKRGND (155 aa)) are a coiled coil. Low complexity-rich tracts occupy residues 385 to 398 (GPST…PSST) and 457 to 468 (NANNDQDQNGNN). Positions 469-481 (TQSPPSRDVSPTS) are enriched in polar residues. An Asymmetric dimethylarginine modification is found at R501. ANK repeat units follow at residues 712–742 (GRPT…DINH), 746–775 (DGHS…QVNA), 779–808 (DGFT…NINH), 812–841 (EGQT…DRSV), 845–874 (DGWT…PACG), and 915–945 (EGWT…EPER). S1527 bears the Phosphoserine mark. Residues 1545–1566 (SESDISKIADTRDDLRRFDSSR) show a composition bias toward basic and acidic residues. Disordered regions lie at residues 1545–1601 (SESD…RSNR) and 1620–1666 (RSKI…KPNQ). Polar residues predominate over residues 1585–1594 (KEVSPLSSHQ). Residues 1627–1641 (SQNTKRSSSSSNTRQ) are compositionally biased toward low complexity. A compositionally biased stretch (basic and acidic residues) spans 1648-1666 (SKDEIWNLRNNEQIEKPNQ).

Interacts with CTTN/cortactin SH3 domain. Interacts with STRN, STRN4/zinedin and MOB4/phocein; this interactions mediate the association with the STRIPAK core complex and may regulate dendritic spine distribution of the STRIPAK complex in hippocampal neurons. Activation of glutamate receptors weakens the interaction with STRN and STRN4.

Its subcellular location is the cytoplasm. The protein resides in the cell cortex. It localises to the cell projection. It is found in the dendritic spine. Its function is as follows. Regulates the dendritic spine distribution of CTTN/cortactin in hippocampal neurons, and thus controls dendritic spinogenesis and dendritic spine maintenance. Associates with the striatin-interacting phosphatase and kinase (STRIPAK) core complex to regulate dendritic spine distribution of the STRIPAK complex in hippocampal neurons. The protein is Cortactin-binding protein 2 (CTTNBP2) of Echinops telfairi (Lesser hedgehog tenrec).